Reading from the N-terminus, the 1273-residue chain is MGYHNVKYGKKAQRRNYSKTIYDVDLPNLIEIQNQSFDWFLKHGIKELLQDFCPIESYNGDLKIHFDDYFLTPPKYSIEETKIKDISYVAQLFVKTTLENVLTGETKQSNILLTELPLMTSTGTFIINGTERVVVSQIVRSASVYFAGNFDIKLNRTIYSGQVIPSRGAWIEYEEGSKEILYAKLDRSKKIPLSNFIYALGFDSKEAIENVFGKSAILDSVFDKETDMDSDNALVELYSKIRQGEKVPVDTARDFIRTRLFDQKKYDLAKVGRYKFNKKLDVLTRAENTYLACDFVNPENQEIMIAQDELLTKEKIAILKQNRHFLLQEIFDAKHNLENETDEEILAYKKYPQKNELFTKTNIINSRTGEVLVAKDTLVNDDIINHLRHNIHTLDEKVSKFFLGTKDIYQKEADRQGVFNEILEVYTSKDESGKLYNKVKLIGNDQRETKKHITLSDVIASINYYLNLYENVGTVDDIDHLGNRRLRLIGELLKNQFRIGLTRAEKNIKDMISTSKFGEVNGPGDLVNFTFLMSVIKTFFTNSRLSQFMDQINPLAELTQKRRVSALGIGGINRDRAGIEVRDVHNSHYGRLCPIETPEGPSIGLITSLSTYAKVNKYGFIQTPFFKVLQQDGKTTLSRDIDYLTADQEKEEIIASAGFVLDANNSFQDKKIIARSNGETGIFERNQITYADVSPKQIVSVATSSIPFLEHNDASRALMGANMQRQAVPLLIPESPIVGTGVEYRAAKDSGCLIIARESGFVTYVDAQKIIITKKPNQTVSLNGKTLYDTTQEFTYTQAKVLYENNHKEYQAEYTLINFAKSNQDTLVLQKPIVVLGEHINEGDILVSGPSTSQGELALGRNVTVAFMTWEGYNYEDAIIMSEELVKHDVYTSIHIDKYEVQTRELKKGSGQEEITREVPNVGADAIKNLDERGIIIPGSEVKEGDILVGKITPQGNIEPSPSEKLIQIVIGEKAREYKDSSLRVPFGEGGIVQSVHYFSRKNGDVLPAGVNENIRVFIAKKRKINEGDKMAGRHGNKGVISRILPKEDLPYMADGTPIDIMLNPLGVPSRMNIGQILEIHLGMAAKKLGIKVATPVFDGVNDYDLKEIMKEANLEPDGKMVLYDGRTGEPYDSRISVGVMYMVKLSHMVDDKLHARNVGPYTLVTQQPMGGKVQNGGQRFGEMEVWALYAYGAAHTLQEILTVKSDDIVGRNKTYSAIVQGTQLPKPSIPESFRVFIKELQSLGLYVELIKTDTKENEVNKSLIDYKKEGYN.

This sequence belongs to the RNA polymerase beta chain family. The RNAP catalytic core consists of 2 alpha, 1 beta, 1 beta' and 1 omega subunit. When a sigma factor is associated with the core the holoenzyme is formed, which can initiate transcription.

It carries out the reaction RNA(n) + a ribonucleoside 5'-triphosphate = RNA(n+1) + diphosphate. In terms of biological role, DNA-dependent RNA polymerase catalyzes the transcription of DNA into RNA using the four ribonucleoside triphosphates as substrates. This Aster yellows witches'-broom phytoplasma (strain AYWB) protein is DNA-directed RNA polymerase subunit beta.